The sequence spans 358 residues: Histidinol-phosphate aminotransferase (358 aa).

K218 is modified (N6-(pyridoxal phosphate)lysine).

Belongs to the class-II pyridoxal-phosphate-dependent aminotransferase family. Histidinol-phosphate aminotransferase subfamily. As to quaternary structure, homodimer. It depends on pyridoxal 5'-phosphate as a cofactor.

It carries out the reaction L-histidinol phosphate + 2-oxoglutarate = 3-(imidazol-4-yl)-2-oxopropyl phosphate + L-glutamate. The protein operates within amino-acid biosynthesis; L-histidine biosynthesis; L-histidine from 5-phospho-alpha-D-ribose 1-diphosphate: step 7/9. The sequence is that of Histidinol-phosphate aminotransferase from Dehalococcoides mccartyi (strain ATCC BAA-2100 / JCM 16839 / KCTC 5957 / BAV1).